Here is a 391-residue protein sequence, read N- to C-terminus: Terminal nucleotidyltransferase 5C (391 aa).

It belongs to the TENT family. In terms of assembly, interacts with BCCIP and PABPC1; the interaction has no effect on TENT5C poly(A) polymerase function. Interacts with PLK4; this interaction leads to the TENT5C recruitment into the centrosome.

Its subcellular location is the nucleus. The protein localises to the cytoplasm. It localises to the cytoskeleton. It is found in the microtubule organizing center. The protein resides in the centrosome. The enzyme catalyses RNA(n) + ATP = RNA(n)-3'-adenine ribonucleotide + diphosphate. In terms of biological role, catalyzes the transfer of one adenosine molecule from an ATP to an mRNA poly(A) tail bearing a 3'-OH terminal group and enhances mRNA stability and gene expression. Can also elongate RNA oligos ending with uridine molecule, provided that the sequence is adenosine-rich. Mainly targets mRNAs encoding endoplasmic reticulum-targeted protein. The protein is Terminal nucleotidyltransferase 5C of Rattus norvegicus (Rat).